Reading from the N-terminus, the 247-residue chain is Probable chemoreceptor glutamine deamidase CheD (247 aa).

Residues 204–247 (KRPAAPQPARPRIELFGGRGTAPGAGSPSAGSPYAANLSRKQEA) form a disordered region. Low complexity predominate over residues 227–239 (GAGSPSAGSPYAA).

The protein belongs to the CheD family.

The catalysed reaction is L-glutaminyl-[protein] + H2O = L-glutamyl-[protein] + NH4(+). In terms of biological role, probably deamidates glutamine residues to glutamate on methyl-accepting chemotaxis receptors (MCPs), playing an important role in chemotaxis. This is Probable chemoreceptor glutamine deamidase CheD from Burkholderia orbicola (strain AU 1054).